A 147-amino-acid polypeptide reads, in one-letter code: Hemoglobin subunit beta (147 aa).

V2 carries the N-acetylvaline modification. Residues 3-147 (HLTPDEKAAV…VANALAHKYH (145 aa)) form the Globin domain. T13 is subject to Phosphothreonine. Residue S45 is modified to Phosphoserine. N6-acetyllysine is present on K60. Residue H64 coordinates heme b. Position 83 is an N6-acetyllysine (K83). Position 93 (H93) interacts with heme b. C94 bears the S-nitrosocysteine mark. At K145 the chain carries N6-acetyllysine.

The protein belongs to the globin family. Heterotetramer of two alpha chains and two beta chains. In terms of tissue distribution, red blood cells.

Involved in oxygen transport from the lung to the various peripheral tissues. The polypeptide is Hemoglobin subunit beta (HBB) (Colobus polykomos (Western black-and-white colobus monkey)).